Reading from the N-terminus, the 792-residue chain is 5-methyltetrahydropteroyltriglutamate--homocysteine methyltransferase (792 aa).

5-methyltetrahydropteroyltri-L-glutamate is bound by residues 16 to 19 (RELK) and Lys-112. Residues 432-434 (IGS) and Glu-485 each bind L-homocysteine. Residues 432–434 (IGS) and Glu-485 contribute to the L-methionine site. 5-methyltetrahydropteroyltri-L-glutamate contacts are provided by residues 516 to 517 (RC) and Trp-562. L-homocysteine is bound at residue Asp-600. L-methionine is bound at residue Asp-600. Position 606 (Glu-606) interacts with 5-methyltetrahydropteroyltri-L-glutamate. Zn(2+) is bound by residues His-642, Cys-644, and Glu-666. Catalysis depends on His-695, which acts as the Proton donor. Cys-727 provides a ligand contact to Zn(2+).

It belongs to the vitamin-B12 independent methionine synthase family. It depends on Zn(2+) as a cofactor.

The catalysed reaction is 5-methyltetrahydropteroyltri-L-glutamate + L-homocysteine = tetrahydropteroyltri-L-glutamate + L-methionine. The protein operates within amino-acid biosynthesis; L-methionine biosynthesis via de novo pathway; L-methionine from L-homocysteine (MetE route): step 1/1. Its function is as follows. Catalyzes the transfer of a methyl group from 5-methyltetrahydrofolate to homocysteine resulting in methionine formation. The protein is 5-methyltetrahydropteroyltriglutamate--homocysteine methyltransferase of Cupriavidus necator (strain ATCC 17699 / DSM 428 / KCTC 22496 / NCIMB 10442 / H16 / Stanier 337) (Ralstonia eutropha).